The primary structure comprises 211 residues: Ribosomal RNA small subunit methyltransferase G (211 aa).

S-adenosyl-L-methionine is bound by residues G79, L84, V130–E131, and R145.

The protein belongs to the methyltransferase superfamily. RNA methyltransferase RsmG family.

The protein resides in the cytoplasm. The catalysed reaction is guanosine(527) in 16S rRNA + S-adenosyl-L-methionine = N(7)-methylguanosine(527) in 16S rRNA + S-adenosyl-L-homocysteine. In terms of biological role, specifically methylates the N7 position of guanine in position 527 of 16S rRNA. This chain is Ribosomal RNA small subunit methyltransferase G, found in Alteromonas mediterranea (strain DSM 17117 / CIP 110805 / LMG 28347 / Deep ecotype).